Reading from the N-terminus, the 1048-residue chain is Platelet-derived growth factor receptor beta (1048 aa).

The signal sequence occupies residues 1–30; it reads MLRASAMRAAVLHLTVALAALLSSCTTVSC. The Extracellular segment spans residues 31–528; sequence LKIVPEEKQL…LVSSSLFSQV (498 aa). The Ig-like C2-type 1 domain occupies 35–124; sequence PEEKQLILAE…EIKEVAVFVP (90 aa). 2 cysteine pairs are disulfide-bonded: Cys-52–Cys-108 and Cys-153–Cys-194. Residues Asn-87, Asn-159, Asn-224, and Asn-239 are each glycosylated (N-linked (GlcNAc...) asparagine). Ig-like C2-type domains are found at residues 216-309 and 319-406; these read PEDI…ASVN and AVKS…KEVT. A disulfide bridge connects residues Cys-240 and Cys-293. Residues Asn-309, Asn-327, and Asn-457 are each glycosylated (N-linked (GlcNAc...) asparagine). Cys-434 and Cys-503 are disulfide-bonded. Residues 529 to 549 traverse the membrane as a helical segment; that stretch reads VLLAVVLTLVPIIIMSIIILI. Residues 550-1048 are Cytoplasmic-facing; the sequence is AVWKKKPRYE…PIPDPKPEKS (499 aa). Phosphotyrosine; by autocatalysis occurs at positions 558, 575, and 577. One can recognise a Protein kinase domain in the interval 596-957; the sequence is LVLGRTLGSG…FLVHCVGDML (362 aa). ATP-binding positions include 602 to 610 and Lys-630; that span reads LGSGAFGRV. Phosphotyrosine; by autocatalysis occurs at positions 735, 746, 758, 766, and 770. Asp-821 (proton acceptor) is an active-site residue. 2 positions are modified to phosphotyrosine; by autocatalysis: Tyr-852 and Tyr-1036.

Belongs to the protein kinase superfamily. Tyr protein kinase family. CSF-1/PDGF receptor subfamily. As to quaternary structure, interacts with homodimeric PDGFB and PDGFD, and with heterodimers formed by PDGFA and PDGFB. Monomer in the absence of bound ligand. Interaction with homodimeric PDGFB, heterodimers formed by PDGFA and PDGFB or homodimeric PDGFD, leads to receptor dimerization, where both PDGFRA homodimers and heterodimers with PDGFRB are observed. Post-translationally, ubiquitinated. After autophosphorylation, the receptor is polyubiquitinated, leading to its degradation. In terms of processing, autophosphorylated on tyrosine residues upon ligand binding. Autophosphorylation occurs in trans, i.e. one subunit of the dimeric receptor phosphorylates tyrosine residues on the other subunit.

It localises to the cell membrane. Its subcellular location is the cytoplasmic vesicle. The protein resides in the lysosome lumen. It carries out the reaction L-tyrosyl-[protein] + ATP = O-phospho-L-tyrosyl-[protein] + ADP + H(+). Present in an inactive conformation in the absence of bound ligand. Binding of PDGFB and/or PDGFD leads to dimerization and activation by autophosphorylation on tyrosine residues. Tyrosine-protein kinase that acts as a cell-surface receptor for homodimeric PDGFB and PDGFD and for heterodimers formed by PDGFA and PDGFB, and plays an essential role in the regulation of embryonic development, cell proliferation, survival, differentiation, chemotaxis and migration. Plays an essential role in blood vessel development by promoting proliferation, migration and recruitment of pericytes and smooth muscle cells to endothelial cells. Required for normal development of the cardiovascular system. Required for normal recruitment of pericytes (mesangial cells) in the kidney glomerulus, and for normal formation of a branched network of capillaries in kidney glomeruli. Promotes rearrangement of the actin cytoskeleton and the formation of membrane ruffles. Binding of its cognate ligands - homodimeric PDGFB, heterodimers formed by PDGFA and PDGFB or homodimeric PDGFD -leads to the activation of several signaling cascades; the response depends on the nature of the bound ligand and is modulated by the formation of heterodimers between PDGFRA and PDGFRB. Receptor signaling is down-regulated by protein phosphatases that dephosphorylate the receptor and its down-stream effectors, and by rapid internalization of the activated receptor. In Takifugu rubripes (Japanese pufferfish), this protein is Platelet-derived growth factor receptor beta (pdgfrb).